Here is a 315-residue protein sequence, read N- to C-terminus: Methionyl-tRNA formyltransferase (315 aa).

113 to 116 (SILP) is a (6S)-5,6,7,8-tetrahydrofolate binding site.

This sequence belongs to the Fmt family.

It catalyses the reaction L-methionyl-tRNA(fMet) + (6R)-10-formyltetrahydrofolate = N-formyl-L-methionyl-tRNA(fMet) + (6S)-5,6,7,8-tetrahydrofolate + H(+). In terms of biological role, attaches a formyl group to the free amino group of methionyl-tRNA(fMet). The formyl group appears to play a dual role in the initiator identity of N-formylmethionyl-tRNA by promoting its recognition by IF2 and preventing the misappropriation of this tRNA by the elongation apparatus. The protein is Methionyl-tRNA formyltransferase of Vibrio cholerae serotype O1 (strain M66-2).